We begin with the raw amino-acid sequence, 308 residues long: Cytochrome b (308 aa).

4 helical membrane-spanning segments follow: residues 1–21, 45–66, 81–101, and 146–166; these read FGSLLGICLLTQIITGLLLAM, WLIRNLHANGASFFFICIYFHI, WNIGVILLLTLMATAFVGYVL, and FFALHFLLPFVIAGLTLVHLT. Residues His51 and His65 each contribute to the heme b site. 2 residues coordinate heme b: His150 and His164. His169 provides a ligand contact to a ubiquinone. 3 helical membrane passes run 194-214, 256-276, and 288-308; these read TKDILGFALMFILLVSLALFS, LGGVLALAASVLVLFLLPLLH, and LSQILFWALVANLLILTWVGS.

Belongs to the cytochrome b family. The cytochrome bc1 complex contains 11 subunits: 3 respiratory subunits (MT-CYB, CYC1 and UQCRFS1), 2 core proteins (UQCRC1 and UQCRC2) and 6 low-molecular weight proteins (UQCRH/QCR6, UQCRB/QCR7, UQCRQ/QCR8, UQCR10/QCR9, UQCR11/QCR10 and a cleavage product of UQCRFS1). This cytochrome bc1 complex then forms a dimer. Requires heme b as cofactor.

It is found in the mitochondrion inner membrane. Its function is as follows. Component of the ubiquinol-cytochrome c reductase complex (complex III or cytochrome b-c1 complex) that is part of the mitochondrial respiratory chain. The b-c1 complex mediates electron transfer from ubiquinol to cytochrome c. Contributes to the generation of a proton gradient across the mitochondrial membrane that is then used for ATP synthesis. The protein is Cytochrome b (MT-CYB) of Baeolophus inornatus (Oak titmouse).